A 172-amino-acid polypeptide reads, in one-letter code: Large ribosomal subunit protein uL10 (172 aa).

Belongs to the universal ribosomal protein uL10 family. Part of the ribosomal stalk of the 50S ribosomal subunit. The N-terminus interacts with L11 and the large rRNA to form the base of the stalk. The C-terminus forms an elongated spine to which L12 dimers bind in a sequential fashion forming a multimeric L10(L12)X complex.

Forms part of the ribosomal stalk, playing a central role in the interaction of the ribosome with GTP-bound translation factors. The sequence is that of Large ribosomal subunit protein uL10 from Francisella philomiragia subsp. philomiragia (strain ATCC 25017 / CCUG 19701 / FSC 153 / O#319-036).